A 447-amino-acid polypeptide reads, in one-letter code: C4-dicarboxylate transport protein (447 aa).

The next 8 helical transmembrane spans lie at 22-42 (FQVI…PLVG), 52-72 (FINL…VTGI), 90-110 (AYFL…AHVV), 159-179 (GNIL…ASVG), 199-219 (LVHI…AFTI), 232-252 (WLVG…LGVV), 325-347 (LFIA…LLVA), and 366-386 (AATL…ILGV).

This sequence belongs to the dicarboxylate/amino acid:cation symporter (DAACS) (TC 2.A.23) family.

It is found in the cell inner membrane. Responsible for the transport of dicarboxylates such as succinate, fumarate, and malate from the periplasm across the membrane. The polypeptide is C4-dicarboxylate transport protein (Stenotrophomonas maltophilia (strain R551-3)).